An 868-amino-acid polypeptide reads, in one-letter code: Envelope glycoprotein gp160 (868 aa).

Residues 1–33 form the signal peptide; the sequence is MAMRAKGIRKNCQHLWRWGTMLLGMLMICSAAA. The Extracellular portion of the chain corresponds to 34–696; it reads NLWVTVYYGV…ITKWLWYIKI (663 aa). C55 and C75 form a disulfide bridge. 21 N-linked (GlcNAc...) asparagine; by host glycosylation sites follow: N89, N131, N138, N139, N142, N162, N166, N195, N198, N208, N245, N252, N273, N287, N300, N306, N312, N342, N349, N365, and N371. Disulfide bonds link C120/C216, C127/C207, C132/C163, C229/C258, and C239/C250. A V1 region spans residues 132 to 162; that stretch reads CTDLNTNNTTNTTELSIIVVWEQRGKGEMRN. The segment at 163–207 is V2; it reads CSFNITTSIRDKVQREYALFYKLDVEPIDDNKNTTNNTKYRLINC. The V3 stretch occupies residues 307–340; the sequence is CTRPNNHTRKRVTLGPGRVWYTTGEILGNIRQAH. A disulfide bridge connects residues C307 and C341. The tract at residues 373–383 is CD4-binding loop; sequence SSGGDPEIVMH. 2 disulfides stabilise this stretch: C387–C456 and C394–C429. The tract at residues 394 to 429 is V4; it reads CNSTQLFNSAWNVTSNGTWSVTRKQKDTGDIITLPC. N-linked (GlcNAc...) asparagine; by host glycosylation is found at N395, N405, N409, N459, and N473. 2 V5 regions span residues 472-482 and 474-482; these read ENQTTEIFRPG and QTTEIFRPG. The tract at residues 523-544 is fusion peptide; sequence AVGMLGAMFLGFLGAAGSTMGA. The interval 586 to 604 is immunosuppression; it reads KQLQARILAVERYLKDQQL. Cysteines 610 and 616 form a disulfide. N-linked (GlcNAc...) asparagine; by host glycans are attached at residues N623, N628, N637, and N649. The stretch at 645-679 forms a coiled coil; sequence REIDNYTHLIYTLIEESQNQQEKNQQELLQLDKWA. An MPER; binding to GalCer region spans residues 674–695; the sequence is QLDKWASLWTWSDITKWLWYIK. Residues 697–717 traverse the membrane as a helical segment; sequence FIMIVGGLIGLRIVFAVLSIV. The Cytoplasmic segment spans residues 718–868; sequence NRVRQGYSPL…IRQGFERALL (151 aa). The short motif at 724–727 is the YXXL motif; contains endocytosis signal element; the sequence is YSPL. The interval 731 to 755 is disordered; it reads TLLPNPRGPDRPEGTEEGGGERGRD. Residues 738 to 755 show a composition bias toward basic and acidic residues; sequence GPDRPEGTEEGGGERGRD. Residue C776 is the site of S-palmitoyl cysteine; by host attachment. Residues 867–868 carry the Di-leucine internalization motif motif; that stretch reads LL.

The protein belongs to the HIV-1 env protein family. In terms of assembly, the mature envelope protein (Env) consists of a homotrimer of non-covalently associated gp120-gp41 heterodimers. The resulting complex protrudes from the virus surface as a spike. There seems to be as few as 10 spikes on the average virion. Interacts with host CD4, CCR5 and CXCR4. Gp120 also interacts with the C-type lectins CD209/DC-SIGN and CLEC4M/DC-SIGNR (collectively referred to as DC-SIGN(R)). Gp120 and gp41 interact with GalCer. Gp120 interacts with host ITGA4/ITGB7 complex; on CD4+ T-cells, this interaction results in rapid activation of integrin ITGAL/LFA-1, which facilitates efficient cell-to-cell spreading of HIV-1. Gp120 interacts with cell-associated heparan sulfate; this interaction increases virus infectivity on permissive cells and may be involved in infection of CD4- cells. The mature envelope protein (Env) consists of a homotrimer of non-covalently associated gp120-gp41 heterodimers. The resulting complex protrudes from the virus surface as a spike. There seems to be as few as 10 spikes on the average virion. Highly glycosylated by host. The high number of glycan on the protein is reffered to as 'glycan shield' because it contributes to hide protein sequence from adaptive immune system. In terms of processing, palmitoylation of the transmembrane protein and of Env polyprotein (prior to its proteolytic cleavage) is essential for their association with host cell membrane lipid rafts. Palmitoylation is therefore required for envelope trafficking to classical lipid rafts, but not for viral replication. Post-translationally, specific enzymatic cleavages in vivo yield mature proteins. Envelope glycoproteins are synthesized as an inactive precursor that is heavily N-glycosylated and processed likely by host cell furin in the Golgi to yield the mature SU and TM proteins. The cleavage site between SU and TM requires the minimal sequence [KR]-X-[KR]-R. About 2 of the 9 disulfide bonds of gp41 are reduced by P4HB/PDI, following binding to CD4 receptor.

The protein localises to the virion membrane. It localises to the host cell membrane. It is found in the host endosome membrane. In terms of biological role, oligomerizes in the host endoplasmic reticulum into predominantly trimers. In a second time, gp160 transits in the host Golgi, where glycosylation is completed. The precursor is then proteolytically cleaved in the trans-Golgi and thereby activated by cellular furin or furin-like proteases to produce gp120 and gp41. Its function is as follows. Attaches the virus to the host lymphoid cell by binding to the primary receptor CD4. This interaction induces a structural rearrangement creating a high affinity binding site for a chemokine coreceptor like CXCR4 and/or CCR5. Acts as a ligand for CD209/DC-SIGN and CLEC4M/DC-SIGNR, which are respectively found on dendritic cells (DCs), and on endothelial cells of liver sinusoids and lymph node sinuses. These interactions allow capture of viral particles at mucosal surfaces by these cells and subsequent transmission to permissive cells. HIV subverts the migration properties of dendritic cells to gain access to CD4+ T-cells in lymph nodes. Virus transmission to permissive T-cells occurs either in trans (without DCs infection, through viral capture and transmission), or in cis (following DCs productive infection, through the usual CD4-gp120 interaction), thereby inducing a robust infection. In trans infection, bound virions remain infectious over days and it is proposed that they are not degraded, but protected in non-lysosomal acidic organelles within the DCs close to the cell membrane thus contributing to the viral infectious potential during DCs' migration from the periphery to the lymphoid tissues. On arrival at lymphoid tissues, intact virions recycle back to DCs' cell surface allowing virus transmission to CD4+ T-cells. Acts as a class I viral fusion protein. Under the current model, the protein has at least 3 conformational states: pre-fusion native state, pre-hairpin intermediate state, and post-fusion hairpin state. During fusion of viral and target intracellular membranes, the coiled coil regions (heptad repeats) assume a trimer-of-hairpins structure, positioning the fusion peptide in close proximity to the C-terminal region of the ectodomain. The formation of this structure appears to drive apposition and subsequent fusion of viral and target cell membranes. Complete fusion occurs in host cell endosomes and is dynamin-dependent, however some lipid transfer might occur at the plasma membrane. The virus undergoes clathrin-dependent internalization long before endosomal fusion, thus minimizing the surface exposure of conserved viral epitopes during fusion and reducing the efficacy of inhibitors targeting these epitopes. Membranes fusion leads to delivery of the nucleocapsid into the cytoplasm. The polypeptide is Envelope glycoprotein gp160 (Human immunodeficiency virus type 1 group M subtype B (isolate CDC-451) (HIV-1)).